A 72-amino-acid polypeptide reads, in one-letter code: Candidate secreted effector protein MPL124499 (72 aa).

Positions M1–G21 are cleaved as a signal peptide.

This sequence belongs to the CPGH1 family.

It localises to the secreted. The protein localises to the host cell. Its subcellular location is the host cytoplasm. It is found in the host nucleus. Rust effector delivered into infected tissues to modulate host functions and contribute to pathogen virulence. Enhances leaf colonization by the bacteria Pseudomonas syringae and the oomycete Hyaloperonospora arabidopsidis pathogens in an Arabidopsis thaliana infection model. The chain is Candidate secreted effector protein MPL124499 from Melampsora larici-populina (strain 98AG31 / pathotype 3-4-7) (Poplar leaf rust fungus).